Consider the following 596-residue polypeptide: Elongation factor 4 (596 aa).

A tr-type G domain is found at 2-184 (KHIRNFSIIA…VIVAQIPPPE (183 aa)). Residues 14–19 (DHGKST) and 131–134 (NKID) each bind GTP.

It belongs to the TRAFAC class translation factor GTPase superfamily. Classic translation factor GTPase family. LepA subfamily.

The protein localises to the cell inner membrane. It catalyses the reaction GTP + H2O = GDP + phosphate + H(+). Functionally, required for accurate and efficient protein synthesis under certain stress conditions. May act as a fidelity factor of the translation reaction, by catalyzing a one-codon backward translocation of tRNAs on improperly translocated ribosomes. Back-translocation proceeds from a post-translocation (POST) complex to a pre-translocation (PRE) complex, thus giving elongation factor G a second chance to translocate the tRNAs correctly. Binds to ribosomes in a GTP-dependent manner. The chain is Elongation factor 4 from Shewanella halifaxensis (strain HAW-EB4).